The sequence spans 491 residues: Probable glycogen synthase 2 (491 aa).

K15 is a binding site for ADP-alpha-D-glucose.

This sequence belongs to the glycosyltransferase 1 family. Bacterial/plant glycogen synthase subfamily.

It catalyses the reaction [(1-&gt;4)-alpha-D-glucosyl](n) + ADP-alpha-D-glucose = [(1-&gt;4)-alpha-D-glucosyl](n+1) + ADP + H(+). The protein operates within glycan biosynthesis; glycogen biosynthesis. Its function is as follows. Synthesizes alpha-1,4-glucan chains using ADP-glucose. In Synechocystis sp. (strain ATCC 27184 / PCC 6803 / Kazusa), this protein is Probable glycogen synthase 2 (glgA2).